The sequence spans 86 residues: Putative defensin-like protein 234 (86 aa).

The signal sequence occupies residues 1–26 (MRSATLLLVSCVLLSFILGNVKEVEA). 4 disulfide bridges follow: C34–C86, C44–C71, C52–C80, and C69–C82.

This sequence belongs to the DEFL family.

It localises to the secreted. The chain is Putative defensin-like protein 234 (SCRL14) from Arabidopsis thaliana (Mouse-ear cress).